The primary structure comprises 163 residues: ATP synthase subunit b 1 (163 aa).

Residues 7–27 (PETWVAIAFVILMGLFAYLGV) form a helical membrane-spanning segment.

The protein belongs to the ATPase B chain family. F-type ATPases have 2 components, F(1) - the catalytic core - and F(0) - the membrane proton channel. F(1) has five subunits: alpha(3), beta(3), gamma(1), delta(1), epsilon(1). F(0) has three main subunits: a(1), b(2) and c(10-14). The alpha and beta chains form an alternating ring which encloses part of the gamma chain. F(1) is attached to F(0) by a central stalk formed by the gamma and epsilon chains, while a peripheral stalk is formed by the delta and b chains.

The protein resides in the cell inner membrane. Functionally, f(1)F(0) ATP synthase produces ATP from ADP in the presence of a proton or sodium gradient. F-type ATPases consist of two structural domains, F(1) containing the extramembraneous catalytic core and F(0) containing the membrane proton channel, linked together by a central stalk and a peripheral stalk. During catalysis, ATP synthesis in the catalytic domain of F(1) is coupled via a rotary mechanism of the central stalk subunits to proton translocation. In terms of biological role, component of the F(0) channel, it forms part of the peripheral stalk, linking F(1) to F(0). This is ATP synthase subunit b 1 from Bradyrhizobium sp. (strain BTAi1 / ATCC BAA-1182).